We begin with the raw amino-acid sequence, 372 residues long: Beta-1,4-galactosyltransferase 2 (372 aa).

Over 1 to 15 (MSRLLGGTLERVCKA) the chain is Cytoplasmic. A helical; Signal-anchor for type II membrane protein membrane pass occupies residues 16–36 (VLLLCLLHFLVAVILYFDVYA). At 37-372 (QHLAFFSRFS…GRPPSWPPRG (336 aa)) the chain is on the lumenal side. A disordered region spans residues 56–97 (PAASSSSSSSNCSRPNATASSSGLPEVPSALPGPTAPTLPPC). 2 N-linked (GlcNAc...) asparagine glycosylation sites follow: Asn-66 and Asn-71. Residues 66–78 (NCSRPNATASSSG) are compositionally biased toward polar residues. Cysteines 97 and 139 form a disulfide. UDP-alpha-D-galactose is bound by residues 150–154 (PFRHR), 189–191 (FNR), 217–218 (VD), and Trp-278. Cys-211 and Cys-230 are joined by a disulfide. Asp-218 provides a ligand contact to Mn(2+). 280-283 (GEDD) provides a ligand contact to N-acetyl-D-glucosamine. His-311 lines the Mn(2+) pocket. 311–313 (HDR) is a UDP-alpha-D-galactose binding site. An N-acetyl-D-glucosamine-binding site is contributed by Arg-323. The N-linked (GlcNAc...) asparagine glycan is linked to Asn-357.

The protein belongs to the glycosyltransferase 7 family. The cofactor is Mn(2+). As to expression, weakly expressed in various tissues. Highest expression in prostate, testis, ovary, intestine, muscle, and in fetal brain.

The protein resides in the golgi apparatus. It is found in the golgi stack membrane. It catalyses the reaction D-glucose + UDP-alpha-D-galactose = lactose + UDP + H(+). It carries out the reaction an N-acetyl-beta-D-glucosaminyl derivative + UDP-alpha-D-galactose = a beta-D-galactosyl-(1-&gt;4)-N-acetyl-beta-D-glucosaminyl derivative + UDP + H(+). The catalysed reaction is N-acetyl-D-glucosamine + UDP-alpha-D-galactose = beta-D-galactosyl-(1-&gt;4)-N-acetyl-D-glucosamine + UDP + H(+). The protein operates within protein modification; protein glycosylation. Functionally, responsible for the synthesis of complex-type N-linked oligosaccharides in many glycoproteins as well as the carbohydrate moieties of glycolipids. Can produce lactose. This is Beta-1,4-galactosyltransferase 2 from Homo sapiens (Human).